Here is a 62-residue protein sequence, read N- to C-terminus: Photosystem II reaction center protein Z (62 aa).

A run of 2 helical transmembrane segments spans residues 8–28 and 41–61; these read ALFA…VVLA and FSGI…NSFV.

This sequence belongs to the PsbZ family. In terms of assembly, PSII is composed of 1 copy each of membrane proteins PsbA, PsbB, PsbC, PsbD, PsbE, PsbF, PsbH, PsbI, PsbJ, PsbK, PsbL, PsbM, PsbT, PsbY, PsbZ, Psb30/Ycf12, at least 3 peripheral proteins of the oxygen-evolving complex and a large number of cofactors. It forms dimeric complexes.

It localises to the plastid. Its subcellular location is the chloroplast thylakoid membrane. Functionally, may control the interaction of photosystem II (PSII) cores with the light-harvesting antenna, regulates electron flow through the 2 photosystem reaction centers. PSII is a light-driven water plastoquinone oxidoreductase, using light energy to abstract electrons from H(2)O, generating a proton gradient subsequently used for ATP formation. In Chlorella vulgaris (Green alga), this protein is Photosystem II reaction center protein Z.